The following is a 582-amino-acid chain: Insulin-like growth factor 2 mRNA-binding protein 3 (582 aa).

2 consecutive RRM domains span residues 2–75 and 81–156; these read NKLY…HSVP and CKLQ…YIPD. The segment at 164–190 is disordered; it reads PAVGGRRGFNPRGPPRQGSPSLGARPK. Residue S182 is modified to Phosphoserine. 4 KH domains span residues 194–259, 275–342, 408–473, and 490–556; these read DVPL…CRNI, EIPL…EEEI, SETV…QGRI, and KLEA…QRKI. Residues 562 to 582 form a disordered region; it reads QVRRQQQPKPSAAGPPVARRK.

It belongs to the RRM IMP/VICKZ family. Homodimer and multimer.

It is found in the cytoplasm. The protein localises to the nucleus. Its subcellular location is the P-body. The protein resides in the stress granule. In terms of biological role, RNA-binding factor that may recruit target transcripts to cytoplasmic protein-RNA complexes (mRNPs). This transcript 'caging' into mRNPs allows mRNA transport and transient storage. It also modulates the rate and location at which target transcripts encounter the translational apparatus and shields them from endonuclease attacks or microRNA-mediated degradation. Preferentially binds to N6-methyladenosine (m6A)-containing mRNAs and increases their stability. Involved in neuronal crest migration. This Danio rerio (Zebrafish) protein is Insulin-like growth factor 2 mRNA-binding protein 3 (igf2bp3).